Reading from the N-terminus, the 296-residue chain is 4-hydroxybenzoate octaprenyltransferase (296 aa).

Helical transmembrane passes span 22–42 (PIGILLLLWPTLWALWLSALG), 46–66 (WIVVWIFILGTVLMRSAGCVI), 99–121 (LFAGLSLLSFLLVVFLGNTLVIW), 139–159 (FFAIPQAYLGVAFGFGIPMAY), 163–183 (LGEVPAEAWWLLLANVFWAVA), 211–231 (FDVAAVMLCYGVTLAIIGGIG), 238–258 (PAFYAGLAVATCIMGVHYTWI), and 270–290 (FLHNNWVGLSIFVGIVVDFLV).

It belongs to the UbiA prenyltransferase family. Mg(2+) is required as a cofactor.

Its subcellular location is the cell inner membrane. The catalysed reaction is all-trans-octaprenyl diphosphate + 4-hydroxybenzoate = 4-hydroxy-3-(all-trans-octaprenyl)benzoate + diphosphate. It functions in the pathway cofactor biosynthesis; ubiquinone biosynthesis. Catalyzes the prenylation of para-hydroxybenzoate (PHB) with an all-trans polyprenyl group. Mediates the second step in the final reaction sequence of ubiquinone-8 (UQ-8) biosynthesis, which is the condensation of the polyisoprenoid side chain with PHB, generating the first membrane-bound Q intermediate 3-octaprenyl-4-hydroxybenzoate. In Dechloromonas aromatica (strain RCB), this protein is 4-hydroxybenzoate octaprenyltransferase.